A 336-amino-acid chain; its full sequence is Fructose-1,6-bisphosphatase class 1 (336 aa).

4 residues coordinate Mg(2+): Glu90, Asp112, Leu114, and Asp115. Substrate-binding positions include 115–118 (DGSS), Asn211, and Lys277. Glu283 contributes to the Mg(2+) binding site.

It belongs to the FBPase class 1 family. Homotetramer. It depends on Mg(2+) as a cofactor.

It localises to the cytoplasm. The catalysed reaction is beta-D-fructose 1,6-bisphosphate + H2O = beta-D-fructose 6-phosphate + phosphate. It functions in the pathway carbohydrate biosynthesis; gluconeogenesis. The chain is Fructose-1,6-bisphosphatase class 1 from Pseudomonas fluorescens (strain Pf0-1).